Here is a 479-residue protein sequence, read N- to C-terminus: Glutamyl-tRNA(Gln) amidotransferase subunit A (479 aa).

Catalysis depends on charge relay system residues Lys-75 and Ser-150. Ser-174 serves as the catalytic Acyl-ester intermediate.

Belongs to the amidase family. GatA subfamily. As to quaternary structure, heterotrimer of A, B and C subunits.

It carries out the reaction L-glutamyl-tRNA(Gln) + L-glutamine + ATP + H2O = L-glutaminyl-tRNA(Gln) + L-glutamate + ADP + phosphate + H(+). Its function is as follows. Allows the formation of correctly charged Gln-tRNA(Gln) through the transamidation of misacylated Glu-tRNA(Gln) in organisms which lack glutaminyl-tRNA synthetase. The reaction takes place in the presence of glutamine and ATP through an activated gamma-phospho-Glu-tRNA(Gln). The chain is Glutamyl-tRNA(Gln) amidotransferase subunit A from Synechococcus sp. (strain ATCC 27144 / PCC 6301 / SAUG 1402/1) (Anacystis nidulans).